Consider the following 267-residue polypeptide: 4-hydroxy-tetrahydrodipicolinate reductase (267 aa).

NAD(+)-binding positions include Gly8–Met13, Glu34, Gly98–Thr100, and Ser122–Met125. The active-site Proton donor/acceptor is the His155. Residue His156 coordinates (S)-2,3,4,5-tetrahydrodipicolinate. Residue Lys159 is the Proton donor of the active site. Gly165–Thr166 is a (S)-2,3,4,5-tetrahydrodipicolinate binding site.

The protein belongs to the DapB family.

The protein resides in the cytoplasm. The enzyme catalyses (S)-2,3,4,5-tetrahydrodipicolinate + NAD(+) + H2O = (2S,4S)-4-hydroxy-2,3,4,5-tetrahydrodipicolinate + NADH + H(+). It catalyses the reaction (S)-2,3,4,5-tetrahydrodipicolinate + NADP(+) + H2O = (2S,4S)-4-hydroxy-2,3,4,5-tetrahydrodipicolinate + NADPH + H(+). It participates in amino-acid biosynthesis; L-lysine biosynthesis via DAP pathway; (S)-tetrahydrodipicolinate from L-aspartate: step 4/4. Its function is as follows. Catalyzes the conversion of 4-hydroxy-tetrahydrodipicolinate (HTPA) to tetrahydrodipicolinate. The chain is 4-hydroxy-tetrahydrodipicolinate reductase from Syntrophobacter fumaroxidans (strain DSM 10017 / MPOB).